A 284-amino-acid chain; its full sequence is uncharacterized protein (284 aa).

The span at 1-27 shows a compositional bias: polar residues; that stretch reads MSNLPTSTPVSPSNLAEENPKSNNPES. Disordered regions lie at residues 1 to 29 and 248 to 284; these read MSNL…ESSE and TRDS…LKKK.

This is an uncharacterized protein from Caenorhabditis elegans.